The chain runs to 648 residues: MKNLFACQHLALSAIQHAKGGHVGMALGASPILYTLWTKHIQFNPNCPKWINRDRLVMSAGHGSMALYPILHFAGLITKQEMLHHKYGQVNTSSHPEYAPNNFIDASTGPLGQGLGMAVGMALTQRVLAAEFKALSPKLFDHFTYVVVGDGDLQEGVSYEVAHLAGVYQLNKLIVLHDSNRVQMDSVVRDVSLENLQTRFTNMGWNYLETSDAVADIDAAIKQAKKSDKPTFIEVHTTIAKNTTLEDQPAGHWFIPTDKDFARFNSNTKTNFTPFEYPQTVYDFFHKQVIARQAKPVQAYKELLEKLKDKPLYTKFINWTENDYQALYLNQLDERKVAQANAATRNYLKDFLGQINNSNSNLYCLNADVARSCNIKLGDDNLHTNPHSRNIQVGIREFGMSTIMNGMALHGGVKVMGGTFLAFADYSKPAIRLGALMNLPTFYVYTHDSYQVGGDGPTHQPYDQLPMLRAIENVQVWRPCDEKETAAGVNYGLLSQDQTNVLILTRQALPSLEQSDSVQTLKGGYIISNRKQPDVIVAASGSEVQLALQLEQALNEQQLKTRVVSVPNINMLLSQPQSYLQQLFDPNSVLLTLEASASMEWYALAKYVKKHTHLGAFSFGESNDGQVVYEHKGFNVTNLLKLIKTLKS.

Position 22 (histidine 22) interacts with substrate. Thiamine diphosphate-binding positions include histidine 62 and 109 to 111 (GPL). Aspartate 150 contacts Mg(2+). Thiamine diphosphate contacts are provided by glycine 151 and asparagine 180. 2 residues coordinate Mg(2+): asparagine 180 and valine 182. Histidine 252, arginine 345, and serine 372 together coordinate substrate. Histidine 252 contacts thiamine diphosphate. Residue glutamate 397 is the Proton donor of the active site. Phenylalanine 423 lines the thiamine diphosphate pocket. 3 residues coordinate substrate: histidine 447, aspartate 455, and arginine 506.

This sequence belongs to the transketolase family. As to quaternary structure, homodimer. Mg(2+) is required as a cofactor. Ca(2+) serves as cofactor. The cofactor is Mn(2+). It depends on Co(2+) as a cofactor. Requires thiamine diphosphate as cofactor.

The catalysed reaction is D-sedoheptulose 7-phosphate + D-glyceraldehyde 3-phosphate = aldehydo-D-ribose 5-phosphate + D-xylulose 5-phosphate. Catalyzes the transfer of a two-carbon ketol group from a ketose donor to an aldose acceptor, via a covalent intermediate with the cofactor thiamine pyrophosphate. This is Transketolase (tkt) from Mycoplasma pneumoniae (strain ATCC 29342 / M129 / Subtype 1) (Mycoplasmoides pneumoniae).